The chain runs to 605 residues: ATP-dependent RNA helicase DBP3 (605 aa).

The tract at residues 1-124 (MSAEELVASP…TPALSKKQQK (124 aa)) is disordered. Basic residues predominate over residues 54–66 (KDKKDKKEKKDKK). Residues 104–114 (PVSTATPTESE) are compositionally biased toward polar residues. Positions 175–201 (LSIRDLPINSKLQPFLNKFEKPTPIQA) match the Q motif motif. Residues 204–391 (WPALLSKKDV…STFLNNPLRI (188 aa)) enclose the Helicase ATP-binding domain. Residue 217–224 (AETGSGKT) coordinates ATP. A DEAD box motif is present at residues 336 to 339 (DEAD). The region spanning 424–575 (HLKAHLKVHP…EIPKEMDRFP (152 aa)) is the Helicase C-terminal domain.

The protein belongs to the DEAD box helicase family. DDX5/DBP2 subfamily.

The protein resides in the nucleus. The protein localises to the nucleolus. The catalysed reaction is ATP + H2O = ADP + phosphate + H(+). In terms of biological role, ATP-dependent RNA helicase required for 60S ribosomal subunit synthesis. Involved in efficient pre-rRNA processing, predominantly at site A3, which is necessary for the normal formation of 25S and 5.8S rRNAs. This chain is ATP-dependent RNA helicase DBP3 (DBP3), found in Cryptococcus neoformans var. neoformans serotype D (strain JEC21 / ATCC MYA-565) (Filobasidiella neoformans).